We begin with the raw amino-acid sequence, 311 residues long: Methionyl-tRNA formyltransferase (311 aa).

Position 109-112 (109-112 (SLLP)) interacts with (6S)-5,6,7,8-tetrahydrofolate.

Belongs to the Fmt family.

It carries out the reaction L-methionyl-tRNA(fMet) + (6R)-10-formyltetrahydrofolate = N-formyl-L-methionyl-tRNA(fMet) + (6S)-5,6,7,8-tetrahydrofolate + H(+). Functionally, attaches a formyl group to the free amino group of methionyl-tRNA(fMet). The formyl group appears to play a dual role in the initiator identity of N-formylmethionyl-tRNA by promoting its recognition by IF2 and preventing the misappropriation of this tRNA by the elongation apparatus. This chain is Methionyl-tRNA formyltransferase, found in Marinobacter nauticus (strain ATCC 700491 / DSM 11845 / VT8) (Marinobacter aquaeolei).